The sequence spans 357 residues: tRNA N6-adenosine threonylcarbamoyltransferase (357 aa).

His-115 and His-119 together coordinate Fe cation. Substrate contacts are provided by residues 137 to 141, Asp-170, Gly-183, and Asn-281; that span reads LASGG. Asp-309 provides a ligand contact to Fe cation.

Belongs to the KAE1 / TsaD family. It depends on Fe(2+) as a cofactor.

It localises to the cytoplasm. It carries out the reaction L-threonylcarbamoyladenylate + adenosine(37) in tRNA = N(6)-L-threonylcarbamoyladenosine(37) in tRNA + AMP + H(+). Functionally, required for the formation of a threonylcarbamoyl group on adenosine at position 37 (t(6)A37) in tRNAs that read codons beginning with adenine. Is involved in the transfer of the threonylcarbamoyl moiety of threonylcarbamoyl-AMP (TC-AMP) to the N6 group of A37, together with TsaE and TsaB. TsaD likely plays a direct catalytic role in this reaction. The protein is tRNA N6-adenosine threonylcarbamoyltransferase of Bradyrhizobium diazoefficiens (strain JCM 10833 / BCRC 13528 / IAM 13628 / NBRC 14792 / USDA 110).